The primary structure comprises 335 residues: Anthranilate phosphoribosyltransferase (335 aa).

Residues Gly79, 82 to 83 (GD), Thr87, 89 to 92 (NIST), 107 to 115 (KHGNRSASS), and Ala119 contribute to the 5-phospho-alpha-D-ribose 1-diphosphate site. Gly79 is a binding site for anthranilate. Ser91 contacts Mg(2+). Position 110 (Asn110) interacts with anthranilate. An anthranilate-binding site is contributed by Arg165. 2 residues coordinate Mg(2+): Asp224 and Glu225.

The protein belongs to the anthranilate phosphoribosyltransferase family. Homodimer. Mg(2+) is required as a cofactor.

The enzyme catalyses N-(5-phospho-beta-D-ribosyl)anthranilate + diphosphate = 5-phospho-alpha-D-ribose 1-diphosphate + anthranilate. Its pathway is amino-acid biosynthesis; L-tryptophan biosynthesis; L-tryptophan from chorismate: step 2/5. Functionally, catalyzes the transfer of the phosphoribosyl group of 5-phosphorylribose-1-pyrophosphate (PRPP) to anthranilate to yield N-(5'-phosphoribosyl)-anthranilate (PRA). In Methanobrevibacter smithii (strain ATCC 35061 / DSM 861 / OCM 144 / PS), this protein is Anthranilate phosphoribosyltransferase.